The primary structure comprises 253 residues: tRNA (guanine-N(1)-)-methyltransferase (253 aa).

S-adenosyl-L-methionine-binding positions include glycine 116 and 136 to 141 (VGDYIL).

Belongs to the RNA methyltransferase TrmD family. Homodimer.

The protein localises to the cytoplasm. The catalysed reaction is guanosine(37) in tRNA + S-adenosyl-L-methionine = N(1)-methylguanosine(37) in tRNA + S-adenosyl-L-homocysteine + H(+). Specifically methylates guanosine-37 in various tRNAs. The chain is tRNA (guanine-N(1)-)-methyltransferase from Colwellia psychrerythraea (strain 34H / ATCC BAA-681) (Vibrio psychroerythus).